We begin with the raw amino-acid sequence, 259 residues long: Protein CDI (259 aa).

The stretch at 236 to 259 forms a coiled coil; that stretch reads FADLWLNEMEEYNKENKKEADNAK.

As to expression, mostly expressed in pollen grains and pollen tubes, and, at low levels, in seedlings, roots, stems, leaves, flowers and siliques.

The protein resides in the cytoplasm. Its subcellular location is the cytosol. Probable nucleotide-diphospho-sugar transferase required for pollen germination and tube growth. In Arabidopsis thaliana (Mouse-ear cress), this protein is Protein CDI.